The following is a 320-amino-acid chain: Probable cell division protein WhiA (320 aa).

Residues 282–315 (TLKELGEMLSPAIGKSGVNHRLRKIDEIATKLQE) constitute a DNA-binding region (H-T-H motif).

The protein belongs to the WhiA family.

Functionally, involved in cell division and chromosome segregation. The polypeptide is Probable cell division protein WhiA (Alkaliphilus oremlandii (strain OhILAs) (Clostridium oremlandii (strain OhILAs))).